The chain runs to 826 residues: Ubiquitin carboxyl-terminal hydrolase 16 (826 aa).

Positions 1–23 are disordered; that stretch reads MGKKRTKGKSVPEKASSESTEPM. The segment at 22–141 adopts a UBP-type zinc-finger fold; it reads PMCRHLRKGL…QVVDYVRKQA (120 aa). Zn(2+)-binding residues include Cys24, His26, Cys48, Cys51, Cys73, Cys76, Cys81, His89, His93, His102, Cys115, and Cys118. Residue Lys139 forms a Glycyl lysine isopeptide (Lys-Gly) (interchain with G-Cter in SUMO2) linkage. Positions 145–184 are disordered; that stretch reads TSKPAEKNNGHIELENKKLEKESKNEQEREKSESMAKENI. A compositionally biased stretch (basic and acidic residues) spans 148 to 180; it reads PAEKNNGHIELENKKLEKESKNEQEREKSESMA. Ser188 bears the Phosphoserine mark. The USP domain occupies 195–825; sequence KGLSNLGNTC…QAYLLFYERI (631 aa). Cys204 (nucleophile) is an active-site residue. The segment covering 392 to 407 has biased composition (basic and acidic residues); it reads QSGKKNINDKNVKKTM. Disordered stretches follow at residues 392–456 and 526–553; these read QSGK…RRQQ and ADER…TSAP. Residues 408 to 419 show a composition bias toward acidic residues; the sequence is EEEDKDSEEEKD. Ser414 is modified (phosphoserine). Residues 436–456 show a composition bias toward basic residues; the sequence is HTQKKAKKQAKKQAKNQRRQQ. A compositionally biased stretch (basic and acidic residues) spans 526–537; sequence ADERKCPEHPEV. Residues 539–551 show a composition bias toward polar residues; it reads SVSTESDLGSLTS. His760 functions as the Proton acceptor in the catalytic mechanism.

It belongs to the peptidase C19 family. USP16 subfamily. As to quaternary structure, homotetramer. Associates with late pre-40S ribosomes. Interacts with CEP78; promoting deubiquitination of tektins. In terms of processing, phosphorylated at the onset of mitosis and dephosphorylated during the metaphase/anaphase transition. Phosphorylation by AURKB enhances the deubiquitinase activity.

The protein resides in the nucleus. It carries out the reaction Thiol-dependent hydrolysis of ester, thioester, amide, peptide and isopeptide bonds formed by the C-terminal Gly of ubiquitin (a 76-residue protein attached to proteins as an intracellular targeting signal).. Specifically deubiquitinates 'Lys-120' of histone H2A (H2AK119Ub), a specific tag for epigenetic transcriptional repression, thereby acting as a coactivator. Deubiquitination of histone H2A is a prerequisite for subsequent phosphorylation at 'Ser-11' of histone H3 (H3S10ph), and is required for chromosome segregation when cells enter into mitosis. In resting B- and T-lymphocytes, phosphorylation by AURKB leads to enhance its activity, thereby maintaining transcription in resting lymphocytes. Regulates Hox gene expression via histone H2A deubiquitination. Prefers nucleosomal substrates. Does not deubiquitinate histone H2B. Also deubiquitinates non-histone proteins, such as ribosomal protein RPS27A: deubiquitination of monoubiquitinated RPS27A promotes maturation of the 40S ribosomal subunit. Also mediates deubiquitination of tektin proteins (TEKT1, TEKT2, TEK3, TEKT4 and TEKT5), promoting their stability. The sequence is that of Ubiquitin carboxyl-terminal hydrolase 16 (Usp16) from Rattus norvegicus (Rat).